The primary structure comprises 333 residues: MLARWLQRQWFDQRRRQPALWLLLPLAWLYAGLSALNRLLAKPKHLPVPVIVVGNIIVGGAGKTPLTLWLARQLRDRGWRPGIVSRGYGRSGDEVRTVSAQSRPEEVGDEPLLLARRSGVPVWVGRHRAVAGEALLAAHPEVNVLLCDDGLQHYALARDVELVVFDVRGAGNGWRLPVGPLREPVSRLASADAVICNGQPETLLPTATPSFEMSLKPGLFYRVDVAGQSASAESLRDRGRLYALAGIGNPERFFRTLESLGLSCETRPFPDHHRYVAADLAFAKDGILLMTEKDAVKCAGMTAGETWVLPVQAELSPALIDLIVEKLRGRQVA.

57–64 (IVGGAGKT) contacts ATP.

This sequence belongs to the LpxK family.

The enzyme catalyses a lipid A disaccharide + ATP = a lipid IVA + ADP + H(+). Its pathway is glycolipid biosynthesis; lipid IV(A) biosynthesis; lipid IV(A) from (3R)-3-hydroxytetradecanoyl-[acyl-carrier-protein] and UDP-N-acetyl-alpha-D-glucosamine: step 6/6. Its function is as follows. Transfers the gamma-phosphate of ATP to the 4'-position of a tetraacyldisaccharide 1-phosphate intermediate (termed DS-1-P) to form tetraacyldisaccharide 1,4'-bis-phosphate (lipid IVA). In Dechloromonas aromatica (strain RCB), this protein is Tetraacyldisaccharide 4'-kinase.